Consider the following 122-residue polypeptide: uncharacterized protein (122 aa).

It belongs to the phage O protein family.

This is an uncharacterized protein from Escherichia coli O6:H1 (strain CFT073 / ATCC 700928 / UPEC).